The primary structure comprises 196 residues: Serine/arginine-rich splicing factor RSZ22A (196 aa).

Positions 2 to 71 (SRVYVGNLDP…NGWRVEQSHN (70 aa)) constitute an RRM domain. Phosphoserine is present on S48. Residues 58–70 (VDGKNGWRVEQSH) are compositionally biased toward basic and acidic residues. The disordered stretch occupies residues 58–196 (VDGKNGWRVE…GLKDVRRSRS (139 aa)). Positions 72–87 (RGGGGGRGGGRGGGDG) are enriched in gly residues. The segment covering 88–100 (GRGRGGSDLKCYE) has biased composition (basic and acidic residues). Residues 96–113 (LKCYECGESGHFARECRS) form a CCHC-type zinc finger. Residues 119–135 (GRRRSRSRSRSPPRYRK) show a composition bias toward basic residues. Phosphoserine is present on residues S136, S144, S146, S151, S159, S170, and S196. Residues 139–149 (YGGRRSYSPRA) show a composition bias toward low complexity.

This sequence belongs to the splicing factor SR family. RSZ subfamily. Component of the spliceosome. In terms of processing, extensively phosphorylated on serine residues in the RS domain.

The protein localises to the nucleus. Its function is as follows. Probably involved in intron recognition and spliceosome assembly. The chain is Serine/arginine-rich splicing factor RSZ22A (RSZ22A) from Arabidopsis thaliana (Mouse-ear cress).